We begin with the raw amino-acid sequence, 220 residues long: Homeobox-leucine zipper protein ATHB-21 (220 aa).

The disordered stretch occupies residues 26–48 (VPQQGGEAKPTRRRKRKSKSVVV). The segment at residues 58–117 (GWFRKRKLSDEQVRMLEISFEDDHKLESERKDRLASELGLDPRQVAVWFQNRRARWKNKR) is a DNA-binding region (homeobox). Residues 118-146 (VEDEYTKLKNAYETTVVEKCRLDSEVIHL) form a leucine-zipper region.

Belongs to the HD-ZIP homeobox family. Class I subfamily. Widely expressed.

The protein resides in the nucleus. Its function is as follows. Probable transcription factor. The chain is Homeobox-leucine zipper protein ATHB-21 (ATHB-21) from Arabidopsis thaliana (Mouse-ear cress).